The primary structure comprises 89 residues: Ubiquinol-cytochrome-c reductase complex assembly factor 3 (89 aa).

The Mitochondrial matrix segment spans residues 1–7 (MEVARKA). A helical membrane pass occupies residues 8–28 (LVAVAVLGGGAGVGSILFALV). Residues 23–80 (ILFALVTPGELQKQSMLQEMPERDSRRRDEAVRTTELVMATLKDAAATKENVAWRRNW) form a mediates lipid-binding region. At 29 to 89 (TPGELQKQSM…WTVSGDGRSA (61 aa)) the chain is on the mitochondrial intermembrane side.

This sequence belongs to the UQCC3 family. Associates with the ubiquinol-cytochrome c reductase complex (mitochondrial respiratory chain complex III(CIII) or cytochrome b-c1 complex). Interacts with UQCC1. Forms a complex, named COMC, composed of UQCC1, UQCC2; UQCC3 and UQCC4; mediates MT-CYB hemylation and association with the first nuclear-encoded complex III subunit UQCRQ. In terms of processing, probably cleaved by OMA1 under mitochondrial stress conditions.

It localises to the mitochondrion inner membrane. Required for the assembly of the ubiquinol-cytochrome c reductase complex (mitochondrial respiratory chain complex III or cytochrome b-c1 complex), mediating cytochrome b recruitment and probably stabilization within the complex. Thereby, plays an important role in ATP production by mitochondria. Cardiolipin-binding protein, it may also control the cardiolipin composition of mitochondria membranes and their morphology. The polypeptide is Ubiquinol-cytochrome-c reductase complex assembly factor 3 (Mus musculus (Mouse)).